The primary structure comprises 121 residues: uncharacterized protein (121 aa).

The interval 20-98 (NEVRTSQSEV…PYYHGSKAST (79 aa)) is disordered. Over residues 35-51 (KKSDNGEKDEKEEKELN) the composition is skewed to basic and acidic residues.

This is an uncharacterized protein from Invertebrate iridescent virus 6 (IIV-6).